The chain runs to 35 residues: Purotoxin-1 (35 aa).

4 disulfides stabilise this stretch: C3-C16, C10-C21, C15-C32, and C23-C30.

This sequence belongs to the neurotoxin 33 family. Expressed by the venom gland.

It localises to the secreted. Its function is as follows. Inhibits P2RX3 receptors. Has an analgesic effect in rat. Enhances the high-affinity desensitization of P2RX3 purinoceptors. At 50 nM, decreases the IC(50) for ambient ATP from 46.5 nM to 12.7 nM in mouse P2RX3. This Alopecosa marikovskyi (Wolf spider) protein is Purotoxin-1.